A 526-amino-acid chain; its full sequence is Probable feruloyl esterase B-2 (526 aa).

The first 18 residues, 1-18 (MTKLSLLPLLALASAVLA), serve as a signal peptide directing secretion. Disulfide bonds link C27-C74 and C62-C113. 3 N-linked (GlcNAc...) asparagine glycosylation sites follow: N52, N97, and N137. 4 disulfides stabilise this stretch: C186/C441, C255/C272, C281/C291, and C503/C525. S187 functions as the Acyl-ester intermediate in the catalytic mechanism. N233 carries N-linked (GlcNAc...) asparagine glycosylation. Residues D256, D259, A261, D263, and I265 each contribute to the Ca(2+) site. N311 is a glycosylation site (N-linked (GlcNAc...) asparagine). Catalysis depends on charge relay system residues D400 and H440. The N-linked (GlcNAc...) asparagine glycan is linked to N516.

Belongs to the tannase family.

It is found in the secreted. It carries out the reaction feruloyl-polysaccharide + H2O = ferulate + polysaccharide.. Functionally, involved in degradation of plant cell walls. Hydrolyzes the feruloyl-arabinose ester bond in arabinoxylans as well as the feruloyl-galactose and feruloyl-arabinose ester bonds in pectin. This chain is Probable feruloyl esterase B-2 (faeB-2), found in Neosartorya fischeri (strain ATCC 1020 / DSM 3700 / CBS 544.65 / FGSC A1164 / JCM 1740 / NRRL 181 / WB 181) (Aspergillus fischerianus).